The chain runs to 1033 residues: MSEVKIDSNSFHKRLSLIQKNLTSIQDKQSCLLLLVGASDDENTYKKTTVLQTWLLGYEFVHTGIYITQDKCVFITSEGKAKYLTNLTSKPTENSSSVEIWPRYKDAEKNKETFKKLIEELKKMSSREKPIGHIAKDQYRGKFIDEWNEVSADAGLSFSDCALLLSESMEIKDSEEFANTKIASKSSTVLMDAFANEMMVVVDEEKKTSNSDLSEKIEDKIDSNKWYTKSATGKKLLQSMKEFDPSLVDWCYSPIIQSGGEYDLKPSAQSTTKALVGDGVILASLGLRYKSYCSNVARTFFIDPTPAMETNYDFLLKLQNHVTSTLLRDGTVASQVYQGALDFIKSEKPDLVQHFTKNCGWLMGIEFRDSTFVLNSKNERKLQNGQIISLTLGFSNLTNDKASNPKLKQYSLILTDTFKVSESEPILLTTYPKARSETSFYFKDDEPTAVKSENGGDKKLKSEKNIKTEKNLAANEANSKILKSKLRHESSAADDSNNTEKIRQEIQSKLHEKRQHEGLARFSKADATDASDFKPVFKKYESYVRESQIPSNVRDLKIHVDYKNQTIILPICGRPVPFHINSFKNGSQNEEGDFTYLRLNFNSPGAGGNVSRRAELPYEDSPENSFLRSVTLRSRDHQRMVDVYKAIQDLKKDAVKREQEKKQMADVVSQANLVELKGSRVKKLDQVFIRPQPDTKKIGGVLQIHENGLRYQSSIRMDQKVDILFSNIKHLFFQSCKDELIVIIHCHLKNPIMIGKKKTHDVQFYREASDMAFDETGGRKRRYRYGDEDELQQEQEERRRKALLDKEFKAFAELISDSSSGMVDLDIPFRELGFSGVPFRSSVLCMPTRDCLIQLIDPPYLVVTLEEIEIAHLERVQFGLKNFDLVFVFKDFNKSVVHINTIPMELLEDVKSWLTDVDIPISEGQMNLNWATIMKTVQSDPYQFFADGGWSFLTGEGDSEEEDEEDEESEFEVSDPDPSDEDVESEAGSEDDYSSDASGSDASGGESEEEEEGEDWDEMERKAAREDKRLGAS.

Coiled-coil stretches lie at residues arginine 103–glutamate 128 and lysine 467–glutamate 517. The interval leucine 953–serine 1033 is disordered. Acidic residues predominate over residues glycine 957–serine 994. Low complexity predominate over residues serine 995–glycine 1005. The span at glutamate 1006–glutamate 1018 shows a compositional bias: acidic residues. The segment covering methionine 1019–serine 1033 has biased composition (basic and acidic residues).

The protein belongs to the peptidase M24 family. SPT16 subfamily. Forms a stable heterodimer with POB3. The SPT16-POB3 dimer weakly associates with multiple molecules of NHP6 to form the FACT complex.

It is found in the nucleus. It localises to the chromosome. In terms of biological role, component of the FACT complex, a general chromatin factor that acts to reorganize nucleosomes. The FACT complex is involved in multiple processes that require DNA as a template such as mRNA elongation, DNA replication and DNA repair. During transcription elongation the FACT complex acts as a histone chaperone that both destabilizes and restores nucleosomal structure. It facilitates the passage of RNA polymerase II and transcription by promoting the dissociation of one histone H2A-H2B dimer from the nucleosome, then subsequently promotes the reestablishment of the nucleosome following the passage of RNA polymerase II. In Debaryomyces hansenii (strain ATCC 36239 / CBS 767 / BCRC 21394 / JCM 1990 / NBRC 0083 / IGC 2968) (Yeast), this protein is FACT complex subunit SPT16 (SPT16).